The sequence spans 212 residues: Ribonuclease HII (212 aa).

Positions 1-204 (MRVGIDEAGR…LRSTAPLYYI (204 aa)) constitute an RNase H type-2 domain. Aspartate 6, glutamate 7, and aspartate 103 together coordinate a divalent metal cation.

The protein belongs to the RNase HII family. Mn(2+) is required as a cofactor. It depends on Mg(2+) as a cofactor.

The protein resides in the cytoplasm. The enzyme catalyses Endonucleolytic cleavage to 5'-phosphomonoester.. Functionally, endonuclease that specifically degrades the RNA of RNA-DNA hybrids. This Saccharolobus solfataricus (strain ATCC 35092 / DSM 1617 / JCM 11322 / P2) (Sulfolobus solfataricus) protein is Ribonuclease HII.